The sequence spans 492 residues: MSLKSERRGIHVDQSELLCKKGCGYYGNPAWQGFCSKCWREEYHKARQKQIQEDWELAERLQREEEEAFASSQSSQGAQSLTFSKFEEKKTNEKTRKVTTVKKFFSASSRVGAKKAEIQEAKAPSPSINRQTSIETDRVSKEFIEFLKTFHKTGQEIYKQTKLFLEAMHYKRDLSIEEQSECTQDFYQNVAERMQTRGKVPPERVEKIMDQIEKYIMTRLYKYVFCPETTDDEKKDLAIQKRIRALHWVTPQMLCVPVNEEIPEVSDMVVKAITDIIEMDSKRVPRDKLACITKCSKHIFNAIKITKNEPASADDFLPTLIYIVLKGNPPRLQSNIQYITRFCNPSRLMTGEDGYYFTNLCCAVAFIEKLDAQSLNLSQEDFDRYMSGQTSPRKQESENWSPDACLGVKQMYKNLDLLSQLNERQERIMNEAKKLEKDLIDWTDGIAKEVQDIVEKYPLEIRPPNQSVAAIDSENVENDKLPPPLQPQVYAG.

Residues 1 to 74 form an interaction with ubiquitinated proteins region; that stretch reads MSLKSERRGI…EEEAFASSQS (74 aa). The A20-type zinc-finger motif lies at 13–47; it reads DQSELLCKKGCGYYGNPAWQGFCSKCWREEYHKAR. 4 residues coordinate Zn(2+): C19, C23, C35, and C38. The interval 66–85 is disordered; sequence EEAFASSQSSQGAQSLTFSK. The span at 69–84 shows a compositional bias: low complexity; the sequence is FASSQSSQGAQSLTFS. S125 and S133 each carry phosphoserine. 2 positions are modified to N6-acetyllysine: K152 and K171. The VPS9 domain occupies 233 to 376; it reads EKKDLAIQKR…IEKLDAQSLN (144 aa). S374, S378, S391, and S401 each carry phosphoserine. The stretch at 408-449 forms a coiled coil; the sequence is VKQMYKNLDLLSQLNERQERIMNEAKKLEKDLIDWTDGIAKE. The disordered stretch occupies residues 471–492; the sequence is IDSENVENDKLPPPLQPQVYAG.

In terms of assembly, heterodimer with RABEP1. The heterodimer binds RAB4A and RAB5A that have been activated by GTP-binding. Binds TSC2, GGA1, GGA2, GGA3, AP1G1 and AP1G2. Interacts with RAB21, and with 100-fold lower affinity also with RAB22. Interacts with ubiquitinated EGFR. Interacts with RGS14; the interaction is GTP-dependent. Monoubiquitinated. As to expression, detected in brain.

The protein localises to the cytoplasm. The protein resides in the early endosome. It localises to the recycling endosome. Its function is as follows. Rab effector protein acting as linker between gamma-adaptin and RAB5A. Involved in endocytic membrane fusion and membrane trafficking of recycling endosomes. Stimulates nucleotide exchange on RAB5A. Can act as a ubiquitin ligase. The protein is Rab5 GDP/GTP exchange factor (RABGEF1) of Bos taurus (Bovine).